We begin with the raw amino-acid sequence, 207 residues long: Urease accessory protein UreG (207 aa).

Residue 12-19 participates in GTP binding; that stretch reads GPVGAGKT.

This sequence belongs to the SIMIBI class G3E GTPase family. UreG subfamily. Homodimer. UreD, UreF and UreG form a complex that acts as a GTP-hydrolysis-dependent molecular chaperone, activating the urease apoprotein by helping to assemble the nickel containing metallocenter of UreC. The UreE protein probably delivers the nickel.

It is found in the cytoplasm. Its function is as follows. Facilitates the functional incorporation of the urease nickel metallocenter. This process requires GTP hydrolysis, probably effectuated by UreG. The protein is Urease accessory protein UreG of Cereibacter sphaeroides (strain ATCC 17029 / ATH 2.4.9) (Rhodobacter sphaeroides).